Here is a 91-residue protein sequence, read N- to C-terminus: Teretoxin Tan22.13 (91 aa).

Positions M1–K21 are cleaved as a signal peptide. A propeptide spanning residues M22–R24 is cleaved from the precursor.

The protein belongs to the teretoxin C (TC) superfamily. Contains 4 disulfide bonds. In terms of tissue distribution, expressed by the venom duct.

The protein resides in the secreted. In Terebra anilis (Auger snail), this protein is Teretoxin Tan22.13.